We begin with the raw amino-acid sequence, 660 residues long: Bifunctional polymyxin resistance protein ArnA (660 aa).

A formyltransferase ArnAFT region spans residues 1–304 (MKAVVFAYHD…TLGLVAGAII (304 aa)). His104 acts as the Proton donor; for formyltransferase activity in catalysis. (6R)-10-formyltetrahydrofolate is bound by residues Arg114 and 136-140 (VSRAD). Positions 314-660 (RRTRVLILGV…KTVELTEPQA (347 aa)) are dehydrogenase ArnADH. Residues Asp347 and 368 to 369 (DI) contribute to the NAD(+) site. UDP-alpha-D-glucuronate-binding positions include Ala393, Tyr398, and 432–433 (TS). Residue Glu434 is the Proton acceptor; for decarboxylase activity of the active site. UDP-alpha-D-glucuronate-binding positions include Arg460, Asn492, 526–535 (KLIDGGRQKR), and Tyr613. The active-site Proton donor; for decarboxylase activity is Arg619.

This sequence in the N-terminal section; belongs to the Fmt family. UDP-L-Ara4N formyltransferase subfamily. The protein in the C-terminal section; belongs to the NAD(P)-dependent epimerase/dehydratase family. UDP-glucuronic acid decarboxylase subfamily. As to quaternary structure, homohexamer, formed by a dimer of trimers.

It catalyses the reaction UDP-alpha-D-glucuronate + NAD(+) = UDP-beta-L-threo-pentopyranos-4-ulose + CO2 + NADH. The catalysed reaction is UDP-4-amino-4-deoxy-beta-L-arabinose + (6R)-10-formyltetrahydrofolate = UDP-4-deoxy-4-formamido-beta-L-arabinose + (6S)-5,6,7,8-tetrahydrofolate + H(+). The protein operates within nucleotide-sugar biosynthesis; UDP-4-deoxy-4-formamido-beta-L-arabinose biosynthesis; UDP-4-deoxy-4-formamido-beta-L-arabinose from UDP-alpha-D-glucuronate: step 1/3. Its pathway is nucleotide-sugar biosynthesis; UDP-4-deoxy-4-formamido-beta-L-arabinose biosynthesis; UDP-4-deoxy-4-formamido-beta-L-arabinose from UDP-alpha-D-glucuronate: step 3/3. It participates in bacterial outer membrane biogenesis; lipopolysaccharide biosynthesis. Bifunctional enzyme that catalyzes the oxidative decarboxylation of UDP-glucuronic acid (UDP-GlcUA) to UDP-4-keto-arabinose (UDP-Ara4O) and the addition of a formyl group to UDP-4-amino-4-deoxy-L-arabinose (UDP-L-Ara4N) to form UDP-L-4-formamido-arabinose (UDP-L-Ara4FN). The modified arabinose is attached to lipid A and is required for resistance to polymyxin and cationic antimicrobial peptides. The sequence is that of Bifunctional polymyxin resistance protein ArnA from Enterobacter sp. (strain 638).